A 463-amino-acid polypeptide reads, in one-letter code: Type II NADH:quinone oxidoreductase Ndh (463 aa).

FAD-binding positions include 21–25 (GSGFG) and valine 89. Glutamate 184 is an active-site residue. FAD contacts are provided by residues aspartate 322 and 333 to 334 (AQ). A helical membrane pass occupies residues 387 to 407 (FSGFIAWLIWLVLHLAYLIGF).

It belongs to the NADH dehydrogenase family. It depends on FAD as a cofactor.

Its subcellular location is the cell inner membrane. The catalysed reaction is a quinone + NADH + H(+) = a quinol + NAD(+). The enzyme catalyses a menaquinone + NADH + H(+) = a menaquinol + NAD(+). It catalyses the reaction a ubiquinone + NADH + H(+) = a ubiquinol + NAD(+). Inhibited by phenothiazine analogs. Inhibited by 2-mercapto-quinazolinones. Not inhibited by classic inhibitors of type I NADH dehydrogenase, such as rotenone, piericidin A and pyridaben. Functionally, alternative, nonproton pumping NADH:quinone oxidoreductase that delivers electrons to the respiratory chain by oxidation of NADH and reduction of quinones. Ndh is probably the main NADH dehydrogenase of M.tuberculosis. This is Type II NADH:quinone oxidoreductase Ndh from Mycobacterium tuberculosis (strain ATCC 25618 / H37Rv).